The primary structure comprises 192 residues: NF-kappa-B inhibitor-interacting Ras-like protein 1 (192 aa).

11 to 18 (GLLSVGKT) contacts GTP. The short motif at 35–43 (DCETLEDVY) is the Effector region element. Positions 58–93 (HLYDTRGLQKGVELPKHYFSFADGFVLVYSVNNLES) are interactions with NFKBIA and NFKBIB. GTP contacts are provided by residues 61 to 65 (DTRGL) and 120 to 123 (NKLD). The disordered stretch occupies residues 168-192 (LSQPQSKSSFPLPGRKNKGNSNPEN).

This sequence belongs to the small GTPase superfamily. Ras family. KappaB-Ras subfamily. In terms of assembly, interacts with both NF-kappa-B inhibitor alpha (NFKBIA) and beta (NFKBIB) in vitro. However, it probably only interacts with NFKBIB in vivo. Forms a complex with NFKBIB and NF-kappa-B heterodimer (p50/NFKB1 and p65/RELA). Also interacts with c-Rel (REL).

The protein resides in the cytoplasm. In terms of biological role, atypical Ras-like protein that acts as a potent regulator of NF-kappa-B activity by preventing the degradation of NF-kappa-B inhibitor beta (NFKBIB) by most signals, explaining why NFKBIB is more resistant to degradation. May act by blocking phosphorylation of NFKBIB and mediating cytoplasmic retention of p65/RELA NF-kappa-B subunit. It is unclear whether it acts as a GTPase. Both GTP- and GDP-bound forms block phosphorylation of NFKBIB. The protein is NF-kappa-B inhibitor-interacting Ras-like protein 1 (Nkiras1) of Mus musculus (Mouse).